Reading from the N-terminus, the 215-residue chain is Fibrillarin-like rRNA/tRNA 2'-O-methyltransferase (215 aa).

The segment at 1-29 (MKASSSLPDGVQRRQFDNRSRLTTHGTTV) is disordered. The segment covering 11–20 (VQRRQFDNRS) has biased composition (basic and acidic residues). S-adenosyl-L-methionine contacts are provided by residues 76–77 (TT), 92–93 (EF), 117–118 (DA), and 138–141 (DVAT).

The protein belongs to the methyltransferase superfamily. Fibrillarin family. In terms of assembly, interacts with nop5. Component of box C/D small ribonucleoprotein (sRNP) particles that contain rpl7ae, FlpA and nop5, plus a guide RNA.

In terms of biological role, involved in pre-rRNA and tRNA processing. Utilizes the methyl donor S-adenosyl-L-methionine to catalyze the site-specific 2'-hydroxyl methylation of ribose moieties in rRNA and tRNA. Site specificity is provided by a guide RNA that base pairs with the substrate. Methylation occurs at a characteristic distance from the sequence involved in base pairing with the guide RNA. This Haloquadratum walsbyi (strain DSM 16790 / HBSQ001) protein is Fibrillarin-like rRNA/tRNA 2'-O-methyltransferase.